The primary structure comprises 360 residues: Lipid-A-disaccharide synthase (360 aa).

The protein belongs to the LpxB family.

It catalyses the reaction a lipid X + a UDP-2-N,3-O-bis[(3R)-3-hydroxyacyl]-alpha-D-glucosamine = a lipid A disaccharide + UDP + H(+). It participates in bacterial outer membrane biogenesis; LPS lipid A biosynthesis. Condensation of UDP-2,3-diacylglucosamine and 2,3-diacylglucosamine-1-phosphate to form lipid A disaccharide, a precursor of lipid A, a phosphorylated glycolipid that anchors the lipopolysaccharide to the outer membrane of the cell. This is Lipid-A-disaccharide synthase from Helicobacter pylori (strain G27).